A 132-amino-acid polypeptide reads, in one-letter code: uncharacterized protein (132 aa).

Lys-59 is covalently cross-linked (Glycyl lysine isopeptide (Lys-Gly) (interchain with G-Cter in SAMP2)).

Belongs to the OsmC/Ohr family.

This is an uncharacterized protein from Haloferax volcanii (strain ATCC 29605 / DSM 3757 / JCM 8879 / NBRC 14742 / NCIMB 2012 / VKM B-1768 / DS2) (Halobacterium volcanii).